A 352-amino-acid chain; its full sequence is MDLLHSWGVELAVYLQTRYGKYEGLFDLASTVADLHTTFFWLFPIWFHLRRDTALRLIWVAVIGDWLNLVLKWVLFGERPYWWVHETKFYGAGPAPSLQQFPITCETGPGSPSGHAMGAAGVWYVMVTALLSIAREKQCPPLLYRFLYIGLWMLMGLVELVVCISRVYMAAHFPHQVIAGIITGTLVAEVVSKEKWIYSASLKKYFLITLFLTSFAVGFYVLLKALDVDLLWTMEKAQKWCIRPEWVHLDSAPFASLLRNMGSLFGLGLGLHSPFYKTTKMRIMSAPLRIGCIVISVSLLHLLDGWTFSPENHMTFYALSFGKSAVALLIPTTLVPWALSKIYPVKTEGKNL.

The Lumenal portion of the chain corresponds to 1–27; sequence MDLLHSWGVELAVYLQTRYGKYEGLFD. A helical membrane pass occupies residues 28–48; the sequence is LASTVADLHTTFFWLFPIWFH. Residues 49-56 lie on the Cytoplasmic side of the membrane; the sequence is LRRDTALR. The chain crosses the membrane as a helical span at residues 57–77; the sequence is LIWVAVIGDWLNLVLKWVLFG. Over 78 to 113 the chain is Lumenal; it reads ERPYWWVHETKFYGAGPAPSLQQFPITCETGPGSPS. A substrate-binding site is contributed by arginine 79. A helical membrane pass occupies residues 114–134; it reads GHAMGAAGVWYVMVTALLSIA. Catalysis depends on histidine 115, which acts as the Proton donor. The Cytoplasmic segment spans residues 135-141; sequence REKQCPP. A helical membrane pass occupies residues 142 to 162; the sequence is LLYRFLYIGLWMLMGLVELVV. Over 163-166 the chain is Lumenal; that stretch reads CISR. Residue arginine 166 participates in substrate binding. Residues 167–187 form a helical membrane-spanning segment; that stretch reads VYMAAHFPHQVIAGIITGTLV. Residue histidine 172 is the Nucleophile of the active site. The Cytoplasmic segment spans residues 188-205; that stretch reads AEVVSKEKWIYSASLKKY. The helical transmembrane segment at 206–226 threads the bilayer; that stretch reads FLITLFLTSFAVGFYVLLKAL. The Lumenal portion of the chain corresponds to 227 to 256; that stretch reads DVDLLWTMEKAQKWCIRPEWVHLDSAPFAS. A helical transmembrane segment spans residues 257–276; it reads LLRNMGSLFGLGLGLHSPFY. The Cytoplasmic portion of the chain corresponds to 277-289; sequence KTTKMRIMSAPLR. The chain crosses the membrane as a helical span at residues 290–310; sequence IGCIVISVSLLHLLDGWTFSP. Topologically, residues 311–324 are lumenal; the sequence is ENHMTFYALSFGKS. Residues 325–345 traverse the membrane as a helical segment; that stretch reads AVALLIPTTLVPWALSKIYPV. Residues 346-352 lie on the Cytoplasmic side of the membrane; the sequence is KTEGKNL. The Prevents secretion from ER signature appears at 349–352; it reads GKNL.

The protein belongs to the glucose-6-phosphatase family.

Its subcellular location is the endoplasmic reticulum membrane. It catalyses the reaction D-glucose 6-phosphate + H2O = D-glucose + phosphate. It participates in carbohydrate biosynthesis; gluconeogenesis. Hydrolyzes glucose-6-phosphate to glucose in the endoplasmic reticulum. Forms with the glucose-6-phosphate transporter (SLC37A4/G6PT) the complex responsible for glucose production in the terminal step of glycogenolysis and gluconeogenesis. Hence, it is the key enzyme in homeostatic regulation of blood glucose levels. The protein is Glucose-6-phosphatase catalytic subunit 1 (g6pc1) of Haplochromis nubilus (Blue Victoria mouthbrooder).